The chain runs to 371 residues: tRNA-specific 2-thiouridylase MnmA (371 aa).

Residues 24 to 31 and Leu50 contribute to the ATP site; that span reads AMSGGVDS. Cys120 (nucleophile) is an active-site residue. An intrachain disulfide couples Cys120 to Cys216. Gly144 serves as a coordination point for ATP. The interaction with tRNA stretch occupies residues 166–168; sequence KDQ. Cys216 serves as the catalytic Cysteine persulfide intermediate.

Belongs to the MnmA/TRMU family.

It localises to the cytoplasm. It catalyses the reaction S-sulfanyl-L-cysteinyl-[protein] + uridine(34) in tRNA + AH2 + ATP = 2-thiouridine(34) in tRNA + L-cysteinyl-[protein] + A + AMP + diphosphate + H(+). Functionally, catalyzes the 2-thiolation of uridine at the wobble position (U34) of tRNA, leading to the formation of s(2)U34. In Wolbachia sp. subsp. Brugia malayi (strain TRS), this protein is tRNA-specific 2-thiouridylase MnmA.